The chain runs to 110 residues: UPF0213 protein DVU_3309 (110 aa).

Positions 8-83 (EVWFVYLLRC…KRQPTDQKLA (76 aa)) constitute a GIY-YIG domain.

Belongs to the UPF0213 family.

This is UPF0213 protein DVU_3309 from Nitratidesulfovibrio vulgaris (strain ATCC 29579 / DSM 644 / CCUG 34227 / NCIMB 8303 / VKM B-1760 / Hildenborough) (Desulfovibrio vulgaris).